We begin with the raw amino-acid sequence, 180 residues long: Large ribosomal subunit protein uL15 (180 aa).

Positions 1 to 62 (MKKERLEQAS…KTAGRGSKGQ (62 aa)) are disordered.

The protein belongs to the universal ribosomal protein uL15 family. Part of the 50S ribosomal subunit.

In terms of biological role, binds to the 23S rRNA. This is Large ribosomal subunit protein uL15 from Leptospira interrogans serogroup Icterohaemorrhagiae serovar copenhageni (strain Fiocruz L1-130).